A 184-amino-acid chain; its full sequence is Large ribosomal subunit protein uL5 (184 aa).

This sequence belongs to the universal ribosomal protein uL5 family. In terms of assembly, part of the 50S ribosomal subunit; part of the 5S rRNA/L5/L18/L25 subcomplex. Contacts the 5S rRNA and the P site tRNA. Forms a bridge to the 30S subunit in the 70S ribosome.

This is one of the proteins that bind and probably mediate the attachment of the 5S RNA into the large ribosomal subunit, where it forms part of the central protuberance. In the 70S ribosome it contacts protein S13 of the 30S subunit (bridge B1b), connecting the 2 subunits; this bridge is implicated in subunit movement. Contacts the P site tRNA; the 5S rRNA and some of its associated proteins might help stabilize positioning of ribosome-bound tRNAs. This Pelagibacter ubique (strain HTCC1062) protein is Large ribosomal subunit protein uL5.